Reading from the N-terminus, the 341-residue chain is Dual oxidase maturation factor 1 (341 aa).

At 1 to 24 (MAALGHTLPFYTGTKPTFPMDTTL) the chain is on the extracellular side. The helical transmembrane segment at 25-45 (AVIITIFLTALVTFIIILPGI) threads the bilayer. The Cytoplasmic segment spans residues 46–51 (RGKTRL). Residues 52-72 (FWLLRVVTSLFIGAVILAVNF) traverse the membrane as a helical segment. The Extracellular portion of the chain corresponds to 73 to 183 (SSEWSVGHVN…RLAGHYASAM (111 aa)). 3 N-linked (GlcNAc...) asparagine glycosylation sites follow: N84, N109, and N121. The helical transmembrane segment at 184-204 (LWVAFLCWLLANVMLSMPVLV) threads the bilayer. Position 205 (Y205) is a topological domain, cytoplasmic. The chain crosses the membrane as a helical span at residues 206-226 (GGHMLLATGLFQLLALFFFSM). Residues 227 to 249 (TTSLISPCPLRLGTAVLHTHHGP) are Extracellular-facing. The chain crosses the membrane as a helical span at residues 250–270 (AFWITLATGLLCILLGLVMAV). At 271–341 (AHRMQPHRLK…EHPKESDCSL (71 aa)) the chain is on the cytoplasmic side.

Belongs to the DUOXA family. In terms of assembly, may interact with NUMB.

Its subcellular location is the membrane. Its function is as follows. May be required for the maturation and the transport from the endoplasmic reticulum to the plasma membrane of functional DUOX1. This chain is Dual oxidase maturation factor 1 (Duoxa1), found in Mus musculus (Mouse).